A 237-amino-acid chain; its full sequence is Uridylate kinase (237 aa).

9–12 is a binding site for ATP; the sequence is KLSG. G51 provides a ligand contact to UMP. ATP is bound by residues G52 and R56. Residues D71 and 132–139 contribute to the UMP site; that span reads CGNPFFTT. ATP contacts are provided by T159, Y165, and D168.

This sequence belongs to the UMP kinase family. In terms of assembly, homohexamer.

It localises to the cytoplasm. It carries out the reaction UMP + ATP = UDP + ADP. It functions in the pathway pyrimidine metabolism; CTP biosynthesis via de novo pathway; UDP from UMP (UMPK route): step 1/1. Inhibited by UTP. Catalyzes the reversible phosphorylation of UMP to UDP. This chain is Uridylate kinase, found in Prochlorococcus marinus (strain SARG / CCMP1375 / SS120).